The primary structure comprises 270 residues: MRLIIEPNYEQLSKWAANYVAAKIKAANPTAEKPFVLGLPTGSSPLGMYKNLIELNKQGVVSFQNVITFNMDEYVGLPKDHPESYHSFMWNNFFSHIDIKPENVNILNGNAEDLEAECASYEARMKAVGGVDLFLGGIGPDGHIAFNEPGSSLSSRTRIKTLTTDTIIANSRFFDNDVNKVPKTSVTVGVGTVLDAKEVLIMVNGHNKARALQQAVEGAVNQMWTITALQLHPKGIIVCDEAACADLKVGTYNYFKDIEKDHLCPCSLLK.

The Proton acceptor; for enolization step role is filled by Asp72. Asp141 acts as the For ring-opening step in catalysis. The Proton acceptor; for ring-opening step role is filled by His143. The For ring-opening step role is filled by Glu148.

The protein belongs to the glucosamine/galactosamine-6-phosphate isomerase family. NagB subfamily.

It carries out the reaction alpha-D-glucosamine 6-phosphate + H2O = beta-D-fructose 6-phosphate + NH4(+). The protein operates within amino-sugar metabolism; N-acetylneuraminate degradation; D-fructose 6-phosphate from N-acetylneuraminate: step 5/5. Allosterically activated by N-acetylglucosamine 6-phosphate (GlcNAc6P). Its function is as follows. Catalyzes the reversible isomerization-deamination of glucosamine 6-phosphate (GlcN6P) to form fructose 6-phosphate (Fru6P) and ammonium ion. The chain is Glucosamine-6-phosphate deaminase from Parabacteroides distasonis (strain ATCC 8503 / DSM 20701 / CIP 104284 / JCM 5825 / NCTC 11152).